Reading from the N-terminus, the 90-residue chain is Small ribosomal subunit protein bS16 (90 aa).

It belongs to the bacterial ribosomal protein bS16 family.

This Geobacillus kaustophilus (strain HTA426) protein is Small ribosomal subunit protein bS16.